A 975-amino-acid chain; its full sequence is Probable dipeptidyl-aminopeptidase B (975 aa).

Over residues 1 to 20 (MAEHGHNMWEEEPSKGRDSL) the composition is skewed to basic and acidic residues. Residues 1 to 111 (MAEHGHNMWE…LSAASGSAGK (111 aa)) are disordered. Residues 1 to 125 (MAEHGHNMWE…YRMMDRGLRR (125 aa)) lie on the Cytoplasmic side of the membrane. Residues 22-31 (SDSSASTTSL) are compositionally biased toward low complexity. The span at 68–84 (LDDEDPLKDEASGDYDL) shows a compositional bias: acidic residues. A helical; Signal-anchor for type II membrane protein transmembrane segment spans residues 126 to 146 (VLIIASLVFVTAWVGGLFIYI). The Vacuolar segment spans residues 147-975 (SHKSYLHGSE…IDNAKPQGKR (829 aa)). Asparagine 207, asparagine 397, and asparagine 622 each carry an N-linked (GlcNAc...) asparagine glycan. Serine 826 serves as the catalytic Charge relay system. The N-linked (GlcNAc...) asparagine glycan is linked to asparagine 885. Active-site charge relay system residues include aspartate 903 and histidine 936.

Belongs to the peptidase S9B family.

It is found in the vacuole membrane. It catalyses the reaction Release of an N-terminal dipeptide, Xaa-Yaa-|-Zaa-, from a polypeptide, preferentially when Yaa is Pro, provided Zaa is neither Pro nor hydroxyproline.. Its function is as follows. Type IV dipeptidyl-peptidase which removes N-terminal dipeptides sequentially from polypeptides having unsubstituted N-termini provided that the penultimate residue is proline. The sequence is that of Probable dipeptidyl-aminopeptidase B (DAPB) from Grosmannia clavigera (strain kw1407 / UAMH 11150) (Blue stain fungus).